Here is a 188-residue protein sequence, read N- to C-terminus: MEVQVAPLRSWEDFFPGSDRFGRPDFKDISKWNNRVVNNLLYYQTNYLMVAAAVVAIVGFLSPLNMLIGGTVVILVFLGFVWVSHNKDILRRMKKQYPTTFVIVIMLSSYFLISYLGDVMVFMFGITLPLLLMFIHASLRLRNIKNKLENKKEEIGLKKTPMGIILDALEQQEDNINKLASYIPKVKE.

Residue M1 is modified to N-acetylmethionine. The Cytoplasmic portion of the chain corresponds to 1-35 (MEVQVAPLRSWEDFFPGSDRFGRPDFKDISKWNNR). The next 2 helical transmembrane spans lie at 36–56 (VVNNLLYYQTNYLMVAAAVVA) and 57–77 (IVGFLSPLNMLIGGTVVILVF). Residues 78–93 (LGFVWVSHNKDILRRM) lie on the Cytoplasmic side of the membrane. 2 helical membrane passes run 94-114 (KKQYPTTFVIVIMLSSYFLIS) and 115-135 (YLGDVMVFMFGITLPLLLMFI). Topologically, residues 136 to 188 (HASLRLRNIKNKLENKKEEIGLKKTPMGIILDALEQQEDNINKLASYIPKVKE) are cytoplasmic. The targeting to endoplasmic reticulum membrane stretch occupies residues 136–188 (HASLRLRNIKNKLENKKEEIGLKKTPMGIILDALEQQEDNINKLASYIPKVKE).

The protein belongs to the PRA1 family. As to quaternary structure, binds to prenylated RAB and Ras superfamily members.

Its subcellular location is the endoplasmic reticulum membrane. The protein localises to the cell membrane. The protein resides in the cytoplasm. It localises to the cytoskeleton. Its function is as follows. Regulates intracellular concentrations of taurine and glutamate. Negatively modulates SLC1A1/EAAC1 glutamate transport activity by decreasing its affinity for glutamate in a PKC activity-dependent manner. May be involved in membrane traffic. This Gallus gallus (Chicken) protein is PRA1 family protein 3 (ARL6IP5).